The primary structure comprises 154 residues: Large ribosomal subunit protein uL13 (154 aa).

It belongs to the universal ribosomal protein uL13 family. In terms of assembly, part of the 50S ribosomal subunit.

This protein is one of the early assembly proteins of the 50S ribosomal subunit, although it is not seen to bind rRNA by itself. It is important during the early stages of 50S assembly. The polypeptide is Large ribosomal subunit protein uL13 (Mesorhizobium japonicum (strain LMG 29417 / CECT 9101 / MAFF 303099) (Mesorhizobium loti (strain MAFF 303099))).